We begin with the raw amino-acid sequence, 31 residues long: Cytochrome b6-f complex subunit 6 (31 aa).

Residues 4–24 (ITSYFGFLLAALTITSALFIG) traverse the membrane as a helical segment.

The protein belongs to the PetL family. The 4 large subunits of the cytochrome b6-f complex are cytochrome b6, subunit IV (17 kDa polypeptide, PetD), cytochrome f and the Rieske protein, while the 4 small subunits are PetG, PetL, PetM and PetN. The complex functions as a dimer.

The protein resides in the plastid. The protein localises to the chloroplast thylakoid membrane. Its function is as follows. Component of the cytochrome b6-f complex, which mediates electron transfer between photosystem II (PSII) and photosystem I (PSI), cyclic electron flow around PSI, and state transitions. PetL is important for photoautotrophic growth as well as for electron transfer efficiency and stability of the cytochrome b6-f complex. The chain is Cytochrome b6-f complex subunit 6 from Humulus lupulus (European hop).